The sequence spans 378 residues: Integrator complex assembly factor WDR73 (378 aa).

WD repeat units lie at residues 73 to 113, 121 to 163, 167 to 205, 214 to 255, 266 to 305, and 322 to 371; these read DFKV…VWQV, KAVS…VVDL, KTTY…LVDT, NRSP…LLDP, QCPV…VYDA, and EPLF…VWDW.

Belongs to the WD repeat WDR73 family. In terms of assembly, interacts with INTS9 and INTS11; the interaction is direct. Part of the multiprotein complex composed of BRAT1, WDR73, as well as integrator complex subunits INTS9 and INTS11. In terms of tissue distribution, expressed in kidney and brain. In the kidney, expressed in glomeruli, most probably in podocytes, and in tubules (at protein level). In the brain, expressed in the cerebellum, with high levels in Purkinje cells and their projecting axons, in the deep cerebellar nuclei and in pyramidal neurons of the cerebral cortex (at protein level). In the white matter, mainly present in astrocytes, but not in oligodendrocytes (at protein level). Also highly expressed in endothelial cells of cerebral capillaries (at protein level).

The protein resides in the cytoplasm. It localises to the cytoskeleton. The protein localises to the spindle. It is found in the spindle pole. Its subcellular location is the cleavage furrow. Component of a multiprotein complex required for the assembly of the RNA endonuclease module of the integrator complex. Associates with INTS9 and INTS11 in the cytoplasm, stabilizing the INTS9-INTS11 heterodimer and blocking the active site of INTS11. BRAT1 then joins the complex and plugs the active site of INTS11, leading to WDR73 release and nuclear import of INTS9 and INTS11. In Homo sapiens (Human), this protein is Integrator complex assembly factor WDR73.